Consider the following 160-residue polypeptide: Protein BOLA1, chloroplastic (160 aa).

A chloroplast-targeting transit peptide spans 1-50; the sequence is MFSSSIRLIVSGFHRTQPLKSPVNSPSVFISVPKFFNSESKSTGTGSRSV. Polar residues predominate over residues 39 to 61; it reads ESKSTGTGSRSVAMSSVEKTGSD. Residues 39–66 are disordered; the sequence is ESKSTGTGSRSVAMSSVEKTGSDSGAIE.

Belongs to the bolA/yrbA family. In terms of assembly, interacts in vitro with GRXS14, GRXS15, GRXS16 and GRXS17, but not with GRXC5. Interacts in vivo only with GRXS14 and GRXS16.

Its subcellular location is the plastid. It is found in the chloroplast. May act either alone or in interaction with glutaredoxin as a redox-regulated transcriptional regulator, or as a factor regulating Fe-S cluster biogenesis. The glutaredoxin-BOLA1 heterodimers bind a labile, oxygen sensitive iron-sulfur cluster. This Arabidopsis thaliana (Mouse-ear cress) protein is Protein BOLA1, chloroplastic.